Here is a 213-residue protein sequence, read N- to C-terminus: Orotate phosphoribosyltransferase (213 aa).

5-phospho-alpha-D-ribose 1-diphosphate is bound at residue lysine 26. Residue phenylalanine 34 to phenylalanine 35 coordinates orotate. Residues tyrosine 72 to lysine 73, arginine 99, lysine 100, lysine 103, histidine 105, and aspartate 124 to alanine 132 contribute to the 5-phospho-alpha-D-ribose 1-diphosphate site. Orotate is bound by residues threonine 128 and arginine 156.

Belongs to the purine/pyrimidine phosphoribosyltransferase family. PyrE subfamily. Homodimer. The cofactor is Mg(2+).

It catalyses the reaction orotidine 5'-phosphate + diphosphate = orotate + 5-phospho-alpha-D-ribose 1-diphosphate. Its pathway is pyrimidine metabolism; UMP biosynthesis via de novo pathway; UMP from orotate: step 1/2. Functionally, catalyzes the transfer of a ribosyl phosphate group from 5-phosphoribose 1-diphosphate to orotate, leading to the formation of orotidine monophosphate (OMP). The sequence is that of Orotate phosphoribosyltransferase from Vibrio vulnificus (strain CMCP6).